We begin with the raw amino-acid sequence, 473 residues long: Rifampicin monooxygenase (473 aa).

FAD is bound by residues threonine 12, glutamate 31, lysine 32, and arginine 41. Residue arginine 43 coordinates rifampicin. 3 residues coordinate FAD: glutamine 98, valine 122, and threonine 156. Arginine 196 is a binding site for rifampicin. Position 276 (aspartate 276) interacts with FAD. Residue glycine 285 coordinates rifampicin. The FAD site is built by leucine 289 and asparagine 290.

Belongs to the rifampicin monooxygenase family. Homodimer. FAD serves as cofactor.

The catalysed reaction is rifampicin + NADPH + O2 = rifampicin para-naphthoquinone carboxamide + NADP(+) + H2O + H(+). The enzyme catalyses rifampicin + NADH + O2 = rifampicin para-naphthoquinone carboxamide + NAD(+) + H2O + H(+). In terms of biological role, monooxygenase that can modify rifampicin, thereby inactivating its antibiotic activity. It constitutes a secondary rifampicin resistance factor. This chain is Rifampicin monooxygenase, found in Nocardia farcinica (strain IFM 10152).